The primary structure comprises 906 residues: Cadherin-2 (906 aa).

A signal peptide spans 1-25; sequence MCRIAGAPRTLLPLLAALLQASVEA. A propeptide spanning residues 26–159 is cleaved from the precursor; that stretch reads SGEIALCKTG…HSGHLQRQKR (134 aa). Phosphoserine is present on residues S96 and S135. Cadherin domains follow at residues 160-267, 268-382, 383-497, 498-603, and 604-714; these read DWVI…RPEF, LHQV…PPEF, TAMT…NPYF, APNP…DNAP, and QVLP…DVDR. Residues 160 to 724 lie on the Extracellular side of the membrane; the sequence is DWVIPPINLP…IVGAGLGTGA (565 aa). E170 lines the Ca(2+) pocket. An N-linked (GlcNAc...) asparagine glycan is attached at N190. Ca(2+)-binding residues include D226, E228, D259, M260, N261, D262, and N263. N-linked (GlcNAc...) asparagine glycosylation is present at N273. The Ca(2+) site is built by D293, D295, and N301. N325 carries an N-linked (GlcNAc...) asparagine glycan. D353 lines the Ca(2+) pocket. 5 N-linked (GlcNAc...) asparagine glycosylation sites follow: N402, N572, N622, N651, and N692. A helical membrane pass occupies residues 725 to 745; it reads IIAILLCIIILLILVLMFVVW. Over 746-906 the chain is Cytoplasmic; it reads MKRRDKERQA…LADMYGGGDD (161 aa). Residues 863–880 show a composition bias toward low complexity; sequence SGSTAGSLSSLNSSSSGG. The segment at 863 to 884 is disordered; the sequence is SGSTAGSLSSLNSSSSGGEQDY.

Homodimer (via extracellular region). Can also form heterodimers with other cadherins (via extracellular region). Dimerization occurs in trans, i.e. with a cadherin chain from another cell. Interacts with CDCP1. Interacts with PCDH8; this complex may also include TAOK2. The interaction with PCDH8 may lead to internalization through TAOK2/p38 MAPK pathway. Identified in a complex containing FGFR4, NCAM1, CDH2, PLCG1, FRS2, SRC, SHC1, GAP43 and CTTN. May interact with OBSCN (via protein kinase domain 2). Interacts with FBXO45. In terms of processing, cleaved by MMP24. Ectodomain cleavage leads to the generation of a soluble 90 kDa N-terminal soluble fragment and a 45 kDa membrane-bound C-terminal fragment 1 (CTF1), which is further cleaved by gamma-secretase into a 35 kDa. Cleavage in neural stem cells by MMP24 affects CDH2-mediated anchorage of neural stem cells to ependymocytes in the adult subependymal zone, leading to modulate neural stem cell quiescence.

Its subcellular location is the cell membrane. The protein localises to the sarcolemma. The protein resides in the cell junction. It is found in the cell surface. It localises to the desmosome. Its subcellular location is the adherens junction. Its function is as follows. Calcium-dependent cell adhesion protein; preferentially mediates homotypic cell-cell adhesion by dimerization with a CDH2 chain from another cell. Cadherins may thus contribute to the sorting of heterogeneous cell types. Acts as a regulator of neural stem cells quiescence by mediating anchorage of neural stem cells to ependymocytes in the adult subependymal zone: upon cleavage by MMP24, CDH2-mediated anchorage is affected, leading to modulate neural stem cell quiescence. Plays a role in cell-to-cell junction formation between pancreatic beta cells and neural crest stem (NCS) cells, promoting the formation of processes by NCS cells. Required for proper neurite branching. Required for pre- and postsynaptic organization. CDH2 may be involved in neuronal recognition mechanism. In hippocampal neurons, may regulate dendritic spine density. This chain is Cadherin-2 (CDH2), found in Callithrix jacchus (White-tufted-ear marmoset).